The following is a 178-amino-acid chain: ATP synthase subunit delta (178 aa).

Belongs to the ATPase delta chain family. In terms of assembly, F-type ATPases have 2 components, F(1) - the catalytic core - and F(0) - the membrane proton channel. F(1) has five subunits: alpha(3), beta(3), gamma(1), delta(1), epsilon(1). F(0) has three main subunits: a(1), b(2) and c(10-14). The alpha and beta chains form an alternating ring which encloses part of the gamma chain. F(1) is attached to F(0) by a central stalk formed by the gamma and epsilon chains, while a peripheral stalk is formed by the delta and b chains.

Its subcellular location is the cell inner membrane. Its function is as follows. F(1)F(0) ATP synthase produces ATP from ADP in the presence of a proton or sodium gradient. F-type ATPases consist of two structural domains, F(1) containing the extramembraneous catalytic core and F(0) containing the membrane proton channel, linked together by a central stalk and a peripheral stalk. During catalysis, ATP synthesis in the catalytic domain of F(1) is coupled via a rotary mechanism of the central stalk subunits to proton translocation. In terms of biological role, this protein is part of the stalk that links CF(0) to CF(1). It either transmits conformational changes from CF(0) to CF(1) or is implicated in proton conduction. The sequence is that of ATP synthase subunit delta from Azotobacter vinelandii (strain DJ / ATCC BAA-1303).